A 238-amino-acid polypeptide reads, in one-letter code: Purine nucleoside phosphorylase DeoD-type (238 aa).

An a purine D-ribonucleoside-binding site is contributed by His-4. Phosphate contacts are provided by residues Gly-20, Arg-24, Arg-43, and 87-90; that span reads RVGS. A purine D-ribonucleoside-binding positions include 179 to 181 and 203 to 204; these read EME and SD. The active-site Proton donor is Asp-204.

It belongs to the PNP/UDP phosphorylase family. As to quaternary structure, homohexamer; trimer of homodimers.

The enzyme catalyses a purine D-ribonucleoside + phosphate = a purine nucleobase + alpha-D-ribose 1-phosphate. It catalyses the reaction a purine 2'-deoxy-D-ribonucleoside + phosphate = a purine nucleobase + 2-deoxy-alpha-D-ribose 1-phosphate. In terms of biological role, catalyzes the reversible phosphorolytic breakdown of the N-glycosidic bond in the beta-(deoxy)ribonucleoside molecules, with the formation of the corresponding free purine bases and pentose-1-phosphate. The protein is Purine nucleoside phosphorylase DeoD-type of Mannheimia succiniciproducens (strain KCTC 0769BP / MBEL55E).